We begin with the raw amino-acid sequence, 433 residues long: Histidinol dehydrogenase 2 (433 aa).

Residues Tyr130, Gln192, and Asn215 each coordinate NAD(+). The substrate site is built by Ser238, Gln260, and His263. Zn(2+)-binding residues include Gln260 and His263. Active-site proton acceptor residues include Glu328 and His329. Substrate-binding residues include His329, Asp362, Glu416, and His421. Asp362 is a Zn(2+) binding site. Residue His421 coordinates Zn(2+).

The protein belongs to the histidinol dehydrogenase family. It depends on Zn(2+) as a cofactor.

The catalysed reaction is L-histidinol + 2 NAD(+) + H2O = L-histidine + 2 NADH + 3 H(+). The protein operates within amino-acid biosynthesis; L-histidine biosynthesis; L-histidine from 5-phospho-alpha-D-ribose 1-diphosphate: step 9/9. Its function is as follows. Catalyzes the sequential NAD-dependent oxidations of L-histidinol to L-histidinaldehyde and then to L-histidine. The sequence is that of Histidinol dehydrogenase 2 from Trichormus variabilis (strain ATCC 29413 / PCC 7937) (Anabaena variabilis).